We begin with the raw amino-acid sequence, 184 residues long: ATP synthase subunit b, chloroplastic (184 aa).

The helical transmembrane segment at 29–49 (INLINLILVLGILFYYGKGVL) threads the bilayer.

This sequence belongs to the ATPase B chain family. As to quaternary structure, F-type ATPases have 2 components, F(1) - the catalytic core - and F(0) - the membrane proton channel. F(1) has five subunits: alpha(3), beta(3), gamma(1), delta(1), epsilon(1). F(0) has four main subunits: a(1), b(1), b'(1) and c(10-14). The alpha and beta chains form an alternating ring which encloses part of the gamma chain. F(1) is attached to F(0) by a central stalk formed by the gamma and epsilon chains, while a peripheral stalk is formed by the delta, b and b' chains.

The protein localises to the plastid. It localises to the chloroplast thylakoid membrane. Its function is as follows. F(1)F(0) ATP synthase produces ATP from ADP in the presence of a proton or sodium gradient. F-type ATPases consist of two structural domains, F(1) containing the extramembraneous catalytic core and F(0) containing the membrane proton channel, linked together by a central stalk and a peripheral stalk. During catalysis, ATP synthesis in the catalytic domain of F(1) is coupled via a rotary mechanism of the central stalk subunits to proton translocation. In terms of biological role, component of the F(0) channel, it forms part of the peripheral stalk, linking F(1) to F(0). In Adiantum capillus-veneris (Maidenhair fern), this protein is ATP synthase subunit b, chloroplastic.